Here is a 507-residue protein sequence, read N- to C-terminus: Bifunctional purine biosynthesis protein PurH (507 aa).

Residues 1 to 144 (MKRALLSVSD…KNSDSVWAVV (144 aa)) form the MGS-like domain.

The protein belongs to the PurH family.

It catalyses the reaction (6R)-10-formyltetrahydrofolate + 5-amino-1-(5-phospho-beta-D-ribosyl)imidazole-4-carboxamide = 5-formamido-1-(5-phospho-D-ribosyl)imidazole-4-carboxamide + (6S)-5,6,7,8-tetrahydrofolate. The enzyme catalyses IMP + H2O = 5-formamido-1-(5-phospho-D-ribosyl)imidazole-4-carboxamide. It functions in the pathway purine metabolism; IMP biosynthesis via de novo pathway; 5-formamido-1-(5-phospho-D-ribosyl)imidazole-4-carboxamide from 5-amino-1-(5-phospho-D-ribosyl)imidazole-4-carboxamide (10-formyl THF route): step 1/1. Its pathway is purine metabolism; IMP biosynthesis via de novo pathway; IMP from 5-formamido-1-(5-phospho-D-ribosyl)imidazole-4-carboxamide: step 1/1. This Lacticaseibacillus paracasei (strain ATCC 334 / BCRC 17002 / CCUG 31169 / CIP 107868 / KCTC 3260 / NRRL B-441) (Lactobacillus paracasei) protein is Bifunctional purine biosynthesis protein PurH.